Consider the following 486-residue polypeptide: UDP-N-acetylmuramate--L-alanine ligase (486 aa).

123-129 provides a ligand contact to ATP; sequence GTHGKTT.

It belongs to the MurCDEF family.

It is found in the cytoplasm. It catalyses the reaction UDP-N-acetyl-alpha-D-muramate + L-alanine + ATP = UDP-N-acetyl-alpha-D-muramoyl-L-alanine + ADP + phosphate + H(+). The protein operates within cell wall biogenesis; peptidoglycan biosynthesis. In terms of biological role, cell wall formation. This is UDP-N-acetylmuramate--L-alanine ligase from Pseudomonas savastanoi pv. phaseolicola (strain 1448A / Race 6) (Pseudomonas syringae pv. phaseolicola (strain 1448A / Race 6)).